We begin with the raw amino-acid sequence, 304 residues long: Glycine--tRNA ligase alpha subunit (304 aa).

The protein belongs to the class-II aminoacyl-tRNA synthetase family. As to quaternary structure, tetramer of two alpha and two beta subunits.

The protein localises to the cytoplasm. It catalyses the reaction tRNA(Gly) + glycine + ATP = glycyl-tRNA(Gly) + AMP + diphosphate. The polypeptide is Glycine--tRNA ligase alpha subunit (Yersinia pseudotuberculosis serotype O:1b (strain IP 31758)).